A 321-amino-acid polypeptide reads, in one-letter code: Olfactory receptor 14J1 (321 aa).

Over 1 to 23 (MVNLTSMSGFLLMGFSDERKLQI) the chain is Extracellular. N-linked (GlcNAc...) asparagine glycosylation is present at N3. A helical membrane pass occupies residues 24-44 (LHALVFLVTYLLALTGNLLII). At 45–52 (TIITVDRR) the chain is on the cytoplasmic side. A helical membrane pass occupies residues 53–73 (LHSPMYYFLKHLSLLDLCFIS). Residues 74–97 (VTVPQSIANSLMGNGYISLVQCIL) are Extracellular-facing. C95 and C187 are disulfide-bonded. A helical membrane pass occupies residues 98 to 118 (QVFFFIALASSEVAILTVMSY). Over 119 to 137 (DRYAAICQPLHYETIMDPR) the chain is Cytoplasmic. A helical transmembrane segment spans residues 138–158 (ACRHAVIAVWIAGGLSGLMHA). Over 159 to 194 (AINFSIPLCGKRVIHQFFCDVPQMLKLACSYEFINE) the chain is Extracellular. A helical transmembrane segment spans residues 195-215 (IALAAFTTSAAFICLISIVLS). Residues 216-235 (YIRIFSTVLRIPSAEGRTKV) lie on the Cytoplasmic side of the membrane. A helical membrane pass occupies residues 236-256 (FSTCLPHLFVATFFLSAAGFE). Residues 257 to 269 (FLRLPSDSSSTVD) lie on the Extracellular side of the membrane. Residues 270-290 (LVFSVFYTVIPPTLNPVIYSL) traverse the membrane as a helical segment. Over 291–321 (RNDSMKAALRKMLSKEELPQRKMCLKAMFKL) the chain is Cytoplasmic.

This sequence belongs to the G-protein coupled receptor 1 family.

It is found in the cell membrane. In terms of biological role, odorant receptor. The polypeptide is Olfactory receptor 14J1 (OR14J1) (Homo sapiens (Human)).